Here is a 60-residue protein sequence, read N- to C-terminus: Large ribosomal subunit protein uL30 (60 aa).

Belongs to the universal ribosomal protein uL30 family. In terms of assembly, part of the 50S ribosomal subunit.

The protein is Large ribosomal subunit protein uL30 of Dechloromonas aromatica (strain RCB).